We begin with the raw amino-acid sequence, 128 residues long: Cytochrome c' (128 aa).

Residues Gln-13, Gln-17, Glu-69, Thr-70, Cys-118, Cys-121, and His-122 each contribute to the heme c site.

Post-translationally, binds 1 heme c group covalently per subunit.

Functionally, cytochrome c' is the most widely occurring bacterial c-type cytochrome. Cytochromes c' are high-spin proteins and the heme has no sixth ligand. Their exact function is not known. The polypeptide is Cytochrome c' (Magnetospirillum fulvum (Rhodospirillum fulvum)).